The primary structure comprises 76 residues: Exodeoxyribonuclease 7 small subunit (76 aa).

The protein belongs to the XseB family. As to quaternary structure, heterooligomer composed of large and small subunits.

It localises to the cytoplasm. The enzyme catalyses Exonucleolytic cleavage in either 5'- to 3'- or 3'- to 5'-direction to yield nucleoside 5'-phosphates.. Functionally, bidirectionally degrades single-stranded DNA into large acid-insoluble oligonucleotides, which are then degraded further into small acid-soluble oligonucleotides. This is Exodeoxyribonuclease 7 small subunit from Bacillus cytotoxicus (strain DSM 22905 / CIP 110041 / 391-98 / NVH 391-98).